Reading from the N-terminus, the 143-residue chain is AP-2 complex subunit sigma (143 aa).

Belongs to the adaptor complexes small subunit family. Adaptor protein complex 2 (AP-2) is a heterotetramer composed of two large adaptins (alpha-type subunit APL3 and beta-type subunit APL1), a medium chain (mu-type subunit APM4) and a small adaptin (sigma-type subunit APS2).

Its subcellular location is the cell membrane. The protein localises to the membrane. The protein resides in the coated pit. Component of the adaptor complexes which link clathrin to receptors in coated vesicles. Clathrin-associated protein complexes are believed to interact with the cytoplasmic tails of membrane proteins, leading to their selection and concentration. This is AP-2 complex subunit sigma (aps-2) from Neurospora crassa (strain ATCC 24698 / 74-OR23-1A / CBS 708.71 / DSM 1257 / FGSC 987).